We begin with the raw amino-acid sequence, 198 residues long: Endoribonuclease YbeY (198 aa).

Residues His-156, His-160, and His-166 each coordinate Zn(2+).

It belongs to the endoribonuclease YbeY family. Zn(2+) is required as a cofactor.

The protein localises to the cytoplasm. In terms of biological role, single strand-specific metallo-endoribonuclease involved in late-stage 70S ribosome quality control and in maturation of the 3' terminus of the 16S rRNA. This chain is Endoribonuclease YbeY, found in Cupriavidus necator (strain ATCC 17699 / DSM 428 / KCTC 22496 / NCIMB 10442 / H16 / Stanier 337) (Ralstonia eutropha).